Reading from the N-terminus, the 646-residue chain is Galactofuranosyltransferase GlfT2 (646 aa).

Residues R182, Q211, N240, and D267 each contribute to the UDP-alpha-D-galactofuranose site. 2 residues coordinate Mn(2+): D267 and D269. The active-site Proton acceptor is the D384. H408 is a binding site for Mn(2+).

Belongs to the glycosyltransferase 2 family. Homotetramer. Mn(2+) is required as a cofactor. Mg(2+) serves as cofactor.

The protein resides in the cell membrane. The catalysed reaction is beta-D-galactofuranosyl-(1-&gt;5)-beta-D-galactofuranosyl-(1-&gt;4)-alpha-L-rhamnosyl-(1-&gt;3)-N-acetyl-alpha-D-glucosaminyl-diphospho-trans,octa-cis-decaprenol + 28 UDP-alpha-D-galactofuranose = [beta-D-galactofuranosyl-(1-&gt;5)-beta-D-galactofuranosyl-(1-&gt;6)]14-beta-D-galactofuranosyl-(1-&gt;5)-beta-D-galactofuranosyl-(1-&gt;4)-alpha-L-rhamnopyranosyl-(1-&gt;3)-N-acetyl-alpha-D-glucosaminyl-diphospho-trans,octa-cis-decaprenol + 28 UDP + 28 H(+). The protein operates within cell wall biogenesis; cell wall polysaccharide biosynthesis. Functionally, involved in the galactan polymerization of the arabinogalactan (AG) region of the mycolylarabinogalactan-peptidoglycan (mAGP) complex, an essential component of the mycobacteria cell wall. Thus, successively transfers approximately 28 galactofuranosyl (Galf) residues from UDP-galactofuranose (UDP-Galf) onto the galactofuranosyl-galactofuranosyl-rhamnosyl-GlcNAc-diphospho-decaprenol (Galf-Galf-Rha-GlcNAc-PP-C50) acceptor produced by GlfT1, with alternating 1-&gt;5 and 1-&gt;6 links, forming a galactan domain with approximately 30 galactofuranosyl residues. This Mycolicibacterium smegmatis (strain ATCC 700084 / mc(2)155) (Mycobacterium smegmatis) protein is Galactofuranosyltransferase GlfT2.